The following is a 638-amino-acid chain: Phosphomethylpyrimidine synthase (638 aa).

Substrate contacts are provided by residues asparagine 243, methionine 272, tyrosine 301, histidine 337, 357–359 (SRG), 398–401 (DGLR), and glutamate 437. Histidine 441 contacts Zn(2+). Tyrosine 464 provides a ligand contact to substrate. Zn(2+) is bound at residue histidine 505. [4Fe-4S] cluster-binding residues include cysteine 585, cysteine 588, and cysteine 593.

This sequence belongs to the ThiC family. Homodimer. It depends on [4Fe-4S] cluster as a cofactor.

The enzyme catalyses 5-amino-1-(5-phospho-beta-D-ribosyl)imidazole + S-adenosyl-L-methionine = 4-amino-2-methyl-5-(phosphooxymethyl)pyrimidine + CO + 5'-deoxyadenosine + formate + L-methionine + 3 H(+). It participates in cofactor biosynthesis; thiamine diphosphate biosynthesis. Catalyzes the synthesis of the hydroxymethylpyrimidine phosphate (HMP-P) moiety of thiamine from aminoimidazole ribotide (AIR) in a radical S-adenosyl-L-methionine (SAM)-dependent reaction. In Aromatoleum aromaticum (strain DSM 19018 / LMG 30748 / EbN1) (Azoarcus sp. (strain EbN1)), this protein is Phosphomethylpyrimidine synthase.